The chain runs to 281 residues: Protein ZAR1-like 1.L (281 aa).

The 3CxxC-type zinc finger occupies 183–267 (QKYGFFHCKN…QELCGRCKGQ (85 aa)).

Belongs to the ZAR1 family. Component of a cytoplasmic ribonucleoprotein complex together with eif4enif1/4E-T and cpeb1. As to expression, expressed in oocytes.

The protein resides in the cytoplasm. Its subcellular location is the cytoplasmic ribonucleoprotein granule. Functionally, mRNA-binding protein required for maternal mRNA storage, translation and degradation during oocyte maturation. Controls timing of meiosis during oogenesis. Probably promotes formation of some phase-separated membraneless compartment that stores maternal mRNAs in oocytes: acts by undergoing liquid-liquid phase separation upon binding to maternal mRNAs. Binds to the 3'-UTR of maternal mRNAs, inhibiting their translation. The polypeptide is Protein ZAR1-like 1.L (Xenopus laevis (African clawed frog)).